The following is a 528-amino-acid chain: T-complex protein 1 subunit gamma (528 aa).

The residue at position 250 (serine 250) is a Phosphoserine. Residues cysteine 364 and cysteine 370 are joined by a disulfide bond.

Belongs to the TCP-1 chaperonin family. As to quaternary structure, heterooligomeric complex of about 850 to 900 kDa that forms two stacked rings, 12 to 16 nm in diameter.

The protein localises to the cytoplasm. In terms of biological role, molecular chaperone; assists the folding of proteins upon ATP hydrolysis. Known to play a role, in vitro, in the folding of actin and tubulin. The protein is T-complex protein 1 subunit gamma (cct3) of Schizosaccharomyces pombe (strain 972 / ATCC 24843) (Fission yeast).